An 83-amino-acid polypeptide reads, in one-letter code: Small ribosomal subunit protein eS21 (83 aa).

It belongs to the eukaryotic ribosomal protein eS21 family. Component of the 40S small ribosomal subunit. Interacts with sta.

Its subcellular location is the cytoplasm. It is found in the cytosol. The protein localises to the rough endoplasmic reticulum. Its function is as follows. May be an associated component of the ribosome rather than a core structural subunit. May act as a translation initiation factor. Has a role in regulation of cell proliferation in the hematopoietic organs and the imaginal disks of larva. The sequence is that of Small ribosomal subunit protein eS21 (RpS21) from Drosophila grimshawi (Hawaiian fruit fly).